Reading from the N-terminus, the 223-residue chain is Ribose-5-phosphate isomerase A (223 aa).

Substrate-binding positions include 32–35, 83–86, and 96–99; these read TGST, DGAD, and KGGG. The Proton acceptor role is filled by Glu105. Lys123 contributes to the substrate binding site.

This sequence belongs to the ribose 5-phosphate isomerase family. Homodimer.

It catalyses the reaction aldehydo-D-ribose 5-phosphate = D-ribulose 5-phosphate. It participates in carbohydrate degradation; pentose phosphate pathway; D-ribose 5-phosphate from D-ribulose 5-phosphate (non-oxidative stage): step 1/1. Functionally, catalyzes the reversible conversion of ribose-5-phosphate to ribulose 5-phosphate. This is Ribose-5-phosphate isomerase A from Acinetobacter baumannii (strain SDF).